A 262-amino-acid chain; its full sequence is MRKIKSLALLAVAALVIGCSSGSKDVEQASVNELYTKGTTSLQEGSYSEAIRYLKATTERFPGSVYQEQAMLDLIYANYKTQDYTQVLLMVDSFLHQFTQSPNQAYAVYMAGLTNAATGDNFIQDFFGIDRATRETTSMRTAFSNFQNLVRVFPNSPYSQDALARMAYIKDALARHELEIAKFYAKRKAWVAVANRVVGMLKQYPDTKATYEGLFLMQEAYEKMGLTALANDTQKIIDANKDKTFAPIEKPNEPDLKVPAVK.

Residues 1 to 18 form the signal peptide; that stretch reads MRKIKSLALLAVAALVIG. A lipid anchor (N-palmitoyl cysteine) is attached at C19. C19 carries the S-diacylglycerol cysteine lipid modification.

The protein belongs to the BamD family. Part of the Bam complex.

The protein localises to the cell outer membrane. In terms of biological role, part of the outer membrane protein assembly complex, which is involved in assembly and insertion of beta-barrel proteins into the outer membrane. This is Outer membrane protein assembly factor BamD from Haemophilus influenzae (strain ATCC 51907 / DSM 11121 / KW20 / Rd).